A 166-amino-acid polypeptide reads, in one-letter code: Nucleotide-binding protein Acid_3194 (166 aa).

This sequence belongs to the YajQ family.

Nucleotide-binding protein. The sequence is that of Nucleotide-binding protein Acid_3194 from Solibacter usitatus (strain Ellin6076).